A 273-amino-acid polypeptide reads, in one-letter code: Flagellin FljO (273 aa).

It belongs to the bacterial flagellin family. In C.crescentus, the flagellar filament is composed of multiple flagellins of 29 kDa; 27 kDa and 25 kDa.

Its subcellular location is the secreted. The protein localises to the bacterial flagellum. In terms of biological role, flagellin is the subunit protein which polymerizes to form the filaments of bacterial flagella. In Caulobacter vibrioides (strain ATCC 19089 / CIP 103742 / CB 15) (Caulobacter crescentus), this protein is Flagellin FljO (fljO).